Here is a 318-residue protein sequence, read N- to C-terminus: Small ribosomal subunit protein uS2 (318 aa).

This sequence belongs to the universal ribosomal protein uS2 family.

This chain is Small ribosomal subunit protein uS2, found in Mesomycoplasma hyopneumoniae (strain J / ATCC 25934 / NCTC 10110) (Mycoplasma hyopneumoniae).